The following is a 384-amino-acid chain: Probable protein phosphatase 2C 48 (384 aa).

The PPM-type phosphatase domain maps to 47–358; the sequence is ITGEFSMAVV…DDITVIVVFL (312 aa). Serine 78 is subject to Phosphoserine. Residues aspartate 89, glycine 90, aspartate 290, and aspartate 349 each contribute to the Mn(2+) site.

It belongs to the PP2C family. The cofactor is Mg(2+). Requires Mn(2+) as cofactor.

The enzyme catalyses O-phospho-L-seryl-[protein] + H2O = L-seryl-[protein] + phosphate. The catalysed reaction is O-phospho-L-threonyl-[protein] + H2O = L-threonyl-[protein] + phosphate. Functionally, may dephosphorylate and repress plasma membrane H(+)-ATPases (PM H(+)-ATPases, e.g. AHA1 and AHA2), thus influencing negatively plant growth and fitness. This is Probable protein phosphatase 2C 48 from Arabidopsis thaliana (Mouse-ear cress).